A 478-amino-acid chain; its full sequence is Chromosomal replication initiator protein DnaA (478 aa).

Positions 1 to 90 (MSVELWQQCV…KRSSAPRAVQ (90 aa)) are domain I, interacts with DnaA modulators. A domain II region spans residues 91 to 141 (PASPPPAVVQAAPVAIEEASAARTVDAQPVAPATVRTERSVQVEGGLKHTS). The segment at 142 to 358 (YLNRAFTFEN…GALKRVIAHS (217 aa)) is domain III, AAA+ region. 4 residues coordinate ATP: glycine 186, glycine 188, lysine 189, and threonine 190. The interval 359–478 (HFTNHPITIE…YKNLLRTLTT (120 aa)) is domain IV, binds dsDNA.

Belongs to the DnaA family. In terms of assembly, oligomerizes as a right-handed, spiral filament on DNA at oriC.

The protein resides in the cytoplasm. In terms of biological role, plays an essential role in the initiation and regulation of chromosomal replication. ATP-DnaA binds to the origin of replication (oriC) to initiate formation of the DNA replication initiation complex once per cell cycle. Binds the DnaA box (a 9 base pair repeat at the origin) and separates the double-stranded (ds)DNA. Forms a right-handed helical filament on oriC DNA; dsDNA binds to the exterior of the filament while single-stranded (ss)DNA is stabiized in the filament's interior. The ATP-DnaA-oriC complex binds and stabilizes one strand of the AT-rich DNA unwinding element (DUE), permitting loading of DNA polymerase. After initiation quickly degrades to an ADP-DnaA complex that is not apt for DNA replication. Binds acidic phospholipids. This Azotobacter vinelandii (strain DJ / ATCC BAA-1303) protein is Chromosomal replication initiator protein DnaA.